The primary structure comprises 56 residues: MIKVKLVRSLICCNPTQRATVAALGLRKVGSEKTFKDDAAIRGMINKVKHLIEVSE.

Belongs to the universal ribosomal protein uL30 family. In terms of assembly, part of the 50S ribosomal subunit.

The sequence is that of Large ribosomal subunit protein uL30 from Nitratidesulfovibrio vulgaris (strain ATCC 29579 / DSM 644 / CCUG 34227 / NCIMB 8303 / VKM B-1760 / Hildenborough) (Desulfovibrio vulgaris).